The chain runs to 199 residues: Peptidyl-tRNA hydrolase (199 aa).

Tyrosine 15 contacts tRNA. Residue histidine 20 is the Proton acceptor of the active site. TRNA contacts are provided by tyrosine 66, asparagine 68, and asparagine 114.

It belongs to the PTH family. As to quaternary structure, monomer.

The protein resides in the cytoplasm. It carries out the reaction an N-acyl-L-alpha-aminoacyl-tRNA + H2O = an N-acyl-L-amino acid + a tRNA + H(+). Its function is as follows. Hydrolyzes ribosome-free peptidyl-tRNAs (with 1 or more amino acids incorporated), which drop off the ribosome during protein synthesis, or as a result of ribosome stalling. Functionally, catalyzes the release of premature peptidyl moieties from peptidyl-tRNA molecules trapped in stalled 50S ribosomal subunits, and thus maintains levels of free tRNAs and 50S ribosomes. The sequence is that of Peptidyl-tRNA hydrolase from Burkholderia multivorans (strain ATCC 17616 / 249).